A 78-amino-acid chain; its full sequence is MPKKILTGVVTSDKPNKTITVSVERKYSHPVLKKVVKVRKKYNAHDENNKFKTGDTVSIIECKPFSKNKKFQVMDESK.

The protein belongs to the universal ribosomal protein uS17 family. Part of the 30S ribosomal subunit.

Functionally, one of the primary rRNA binding proteins, it binds specifically to the 5'-end of 16S ribosomal RNA. In Pelagibacter ubique (strain HTCC1062), this protein is Small ribosomal subunit protein uS17.